Consider the following 607-residue polypeptide: Rap1 GTPase-GDP dissociation stimulator 1-B (607 aa).

ARM repeat units follow at residues 79 to 118, 170 to 211, 347 to 390, 391 to 431, and 479 to 519; these read ELMRIPCVEADLIPPLVQLLHSKDQEVLLQTGRALGNICY, DSLQ…NLAE, DGNC…NLAI, PVVN…MLID, and SKDV…LIAA.

Interacts with ralB. Probably interacts with the post-translationally isoprenylated (geranyl-geranylation) forms of ral proteins. Interacts with both GDP-bound and GTP-bound forms of ralA, but interaction is much stronger with ralA-GDP.

Its subcellular location is the cytoplasm. The protein resides in the cytosol. It is found in the endoplasmic reticulum. It localises to the mitochondrion. In terms of biological role, stimulates GDP/GTP exchange reaction of a group of small GTP-binding proteins (G proteins) including Rap1a/Rap1b, RhoA, RhoB and KRas, by stimulating the dissociation of GDP from and the subsequent binding of GTP to each small G protein. The polypeptide is Rap1 GTPase-GDP dissociation stimulator 1-B (rap1gds1-b) (Xenopus laevis (African clawed frog)).